The chain runs to 261 residues: General secretion pathway protein N (261 aa).

The Cytoplasmic segment spans residues 1–10 (MRLEMIGLRT). The helical transmembrane segment at 11 to 31 (WLLATVVGWALLVCVLAVAGL) threads the bilayer. Residues 32 to 261 (GKRVELLPDD…QGGSTPGQTQ (230 aa)) are Periplasmic-facing. The disordered stretch occupies residues 158–261 (VFNGQGGQPP…QGGSTPGQTQ (104 aa)). Pro residues predominate over residues 179–200 (AVPPLPPNVPPAPATPAPPPAE). A compositionally biased stretch (low complexity) spans 201-211 (VPQQQPGGQAP). The span at 227–244 (RPSDEQMRAIRERIEARR) shows a compositional bias: basic and acidic residues.

As to quaternary structure, binds to XpsD.

Its subcellular location is the cell inner membrane. Functionally, involved in a general secretion pathway (GSP) for the export of proteins. This is General secretion pathway protein N (xpsN) from Xanthomonas campestris pv. campestris (strain ATCC 33913 / DSM 3586 / NCPPB 528 / LMG 568 / P 25).